Here is a 295-residue protein sequence, read N- to C-terminus: Protease HtpX (295 aa).

The next 2 membrane-spanning stretches (helical) occupy residues 4–24 (ILLFLATNLAVVLIASITLSL) and 42–62 (QLLIFCAVFGFAGSLFSLFIS). Histidine 147 provides a ligand contact to Zn(2+). Glutamate 148 is a catalytic residue. Histidine 151 contributes to the Zn(2+) binding site. The next 2 membrane-spanning stretches (helical) occupy residues 158–178 (VTLALIQGVVNTFVMFFARII) and 199–219 (VATIFAELVLGILASAIVMWF). Zn(2+) is bound at residue glutamate 224.

This sequence belongs to the peptidase M48B family. The cofactor is Zn(2+).

It is found in the cell inner membrane. The chain is Protease HtpX from Pseudomonas fluorescens (strain ATCC BAA-477 / NRRL B-23932 / Pf-5).